A 393-amino-acid chain; its full sequence is Eukaryotic translation initiation factor 5 (393 aa).

Position 28-35 (28-35 (GKGNGIKT)) interacts with GTP. 2 disordered regions span residues 144–179 (KAVSTKSTHDEALAQQPQIKKEKKSKKKKDDDDEED) and 217–247 (EPQSAKEEQDEDDEQEEGQEKESDPVSSISS). The 163-residue stretch at 223 to 385 (EEQDEDDEQE…ETAEEEEEDE (163 aa)) folds into the W2 domain. Over residues 224–233 (EQDEDDEQEE) the composition is skewed to acidic residues.

Belongs to the eIF-2-beta/eIF-5 family.

Functionally, catalyzes the hydrolysis of GTP bound to the 40S ribosomal initiation complex (40S.mRNA.Met-tRNA[F].eIF-2.GTP) with the subsequent joining of a 60S ribosomal subunit resulting in the release of eIF-2 and the guanine nucleotide. The subsequent joining of a 60S ribosomal subunit results in the formation of a functional 80S initiation complex (80S.mRNA.Met-tRNA[F]). This Dictyostelium discoideum (Social amoeba) protein is Eukaryotic translation initiation factor 5 (eif5).